The sequence spans 99 residues: Large ribosomal subunit protein bL21 (99 aa).

Belongs to the bacterial ribosomal protein bL21 family. As to quaternary structure, part of the 50S ribosomal subunit. Contacts protein L20.

In terms of biological role, this protein binds to 23S rRNA in the presence of protein L20. The chain is Large ribosomal subunit protein bL21 from Mycoplasma mobile (strain ATCC 43663 / 163K / NCTC 11711) (Mesomycoplasma mobile).